Reading from the N-terminus, the 88-residue chain is MSDAQGFARDQLRAFIERIERLEEEKKTIADDIKDVYGEAKSMGFDTKILRKVISIRKQDADERLEQEAILDTYLQALGMVPAAEEAA.

The protein belongs to the UPF0335 family.

The sequence is that of UPF0335 protein NGR_c28390 from Sinorhizobium fredii (strain NBRC 101917 / NGR234).